We begin with the raw amino-acid sequence, 265 residues long: Type III pantothenate kinase (265 aa).

Position 17–24 (17–24) interacts with ATP; that stretch reads DIGNTSIS. 114–117 contributes to the substrate binding site; that stretch reads GSDV. Residue Asp-116 is the Proton acceptor of the active site. A K(+)-binding site is contributed by Asp-137. ATP is bound at residue Thr-140. Residue Thr-192 coordinates substrate.

Belongs to the type III pantothenate kinase family. As to quaternary structure, homodimer. NH4(+) is required as a cofactor. The cofactor is K(+).

It is found in the cytoplasm. The enzyme catalyses (R)-pantothenate + ATP = (R)-4'-phosphopantothenate + ADP + H(+). The protein operates within cofactor biosynthesis; coenzyme A biosynthesis; CoA from (R)-pantothenate: step 1/5. Catalyzes the phosphorylation of pantothenate (Pan), the first step in CoA biosynthesis. This is Type III pantothenate kinase from Borrelia hermsii (strain HS1 / DAH).